A 475-amino-acid polypeptide reads, in one-letter code: Ankyrin repeat, SAM and basic leucine zipper domain-containing protein 1 (475 aa).

Residues 1 to 23 are disordered; the sequence is MAAARFRGLAVAGGGESSESEDD. Ser-17, Ser-18, and Ser-20 each carry phosphoserine. 6 ANK repeats span residues 45-74, 78-107, 110-144, 148-177, 181-210, and 214-243; these read EKNE…SVDS, YGWT…KASF, DKQT…DPNV, RLMT…EVNT, NGYT…NKML, and DGKT…PLEG. The SAM domain maps to 272 to 334; that stretch reads SYTAFGDLEI…KILAALKELE (63 aa).

In terms of assembly, interacts with DDX4, PIWIL1, RANBP9 and TDRD1.

The protein localises to the cytoplasm. Functionally, plays a central role during spermatogenesis by repressing transposable elements and preventing their mobilization, which is essential for the germline integrity. Acts via the piRNA metabolic process, which mediates the repression of transposable elements during meiosis by forming complexes composed of piRNAs and Piwi proteins and governs the methylation and subsequent repression of transposons. Its association with pi-bodies suggests a participation in the primary piRNAs metabolic process. Required prior to the pachytene stage to facilitate the production of multiple types of piRNAs, including those associated with repeats involved in the regulation of retrotransposons. May act by mediating protein-protein interactions during germ cell maturation. This is Ankyrin repeat, SAM and basic leucine zipper domain-containing protein 1 (ASZ1) from Equus caballus (Horse).